A 473-amino-acid chain; its full sequence is N-lysine methyltransferase SETD6 (473 aa).

K39 is subject to N6-methylated lysine; by autocatalysis. Residues 60–286 (PPAQVAVSRQ…KGHEIFNTYG (227 aa)) enclose the SET domain. Position 73–75 (73–75 (AGY)) interacts with S-adenosyl-L-methionine. W122 lines the substrate pocket. K179 is subject to N6-methylated lysine; by autocatalysis. An S-adenosyl-L-methionine-binding site is contributed by Y223. 2 residues coordinate substrate: S224 and Q226. 251 to 252 (NH) provides a ligand contact to S-adenosyl-L-methionine. Residues Y262 and Y297 each coordinate substrate. Y297 is an S-adenosyl-L-methionine binding site. N6-methylated lysine; by autocatalysis is present on K372.

It belongs to the class V-like SAM-binding methyltransferase superfamily. Histone-lysine methyltransferase family. SETD6 subfamily. In terms of assembly, monomer, homodimer and homotrimer; these structures are stabilized in the presence of S-adenosyl-L-methionine (SAM). Post-translationally, automethylated; Lys-39 and Lys-179 serve as the major automethylation sites.

It localises to the nucleus. The enzyme catalyses L-lysyl-[protein] + S-adenosyl-L-methionine = N(6)-methyl-L-lysyl-[protein] + S-adenosyl-L-homocysteine + H(+). It carries out the reaction L-lysyl(8)-[histone H2AZ] + S-adenosyl-L-methionine = N(6)-methyl-L-lysyl(8)-[histone H2AZ] + S-adenosyl-L-homocysteine + H(+). Its activity is regulated as follows. Activated by automethylation. Functionally, protein-lysine N-methyltransferase. Monomethylates 'Lys-310' of the RELA subunit of NF-kappa-B complex, leading to down-regulation of NF-kappa-B transcription factor activity. Monomethylates 'Lys-8' of H2AZ (H2AZK8me1). Required for the maintenance of embryonic stem cell self-renewal. Methylates PAK4. The sequence is that of N-lysine methyltransferase SETD6 from Homo sapiens (Human).